Reading from the N-terminus, the 442-residue chain is MITPKVLSGFKDRLPKDAIQKAQLLAKVSVVFQSFGFVPIETPHLEYAQTLLPDTSSDIQKEIYRFKDHGDRDVALRFDLTVPLARFVSLHHQILGMPFKRYAIGNVFRGERAQKGRYREFTQCDFDFIGSESLVCDAEIIQVIIASLKALDLEDFCVSINHRKILNGICEYFRISQVNEALRIVDKLEKIGLDGVEEELKKECDLNSNTIKELLEMVQIKQNDLSHAEFFEKIAYLKDYNENLKKGIQDLERLYQLLGDLQISQNLYKIDFSIARGLGYYTGIVYETTLNEMKSLGSVCSGGRYDHLTKNFSKENLQGVGASIGIDRLIVALSEMQLLDERSTQAKVLIACMHEEYFSYANRLAESLRQSGIFSEVYPEAQKIKKPFSYANHRGHEFVAVIGEEEFKSETLSLKNMHSGMQLNCLSFLKALEIIGENDEDL.

It belongs to the class-II aminoacyl-tRNA synthetase family. In terms of assembly, homodimer.

It localises to the cytoplasm. It carries out the reaction tRNA(His) + L-histidine + ATP = L-histidyl-tRNA(His) + AMP + diphosphate + H(+). The chain is Histidine--tRNA ligase from Helicobacter pylori (strain P12).